The primary structure comprises 196 residues: Phosphoheptose isomerase (196 aa).

Residues 36–195 (VIQAYKLGKK…EKELFGEKVD (160 aa)) form the SIS domain. Residue 51–53 (NGG) participates in substrate binding. 2 residues coordinate Zn(2+): His-60 and Glu-64. Substrate contacts are provided by residues Glu-64, 93 to 94 (ND), 119 to 121 (STS), Ser-124, and Gln-171. The Zn(2+) site is built by Gln-171 and His-179.

The protein belongs to the SIS family. GmhA subfamily. Requires Zn(2+) as cofactor.

Its subcellular location is the cytoplasm. The catalysed reaction is 2 D-sedoheptulose 7-phosphate = D-glycero-alpha-D-manno-heptose 7-phosphate + D-glycero-beta-D-manno-heptose 7-phosphate. Its pathway is carbohydrate biosynthesis; D-glycero-D-manno-heptose 7-phosphate biosynthesis; D-glycero-alpha-D-manno-heptose 7-phosphate and D-glycero-beta-D-manno-heptose 7-phosphate from sedoheptulose 7-phosphate: step 1/1. Its function is as follows. Catalyzes the isomerization of sedoheptulose 7-phosphate in D-glycero-D-manno-heptose 7-phosphate. This is Phosphoheptose isomerase from Clostridium acetobutylicum (strain ATCC 824 / DSM 792 / JCM 1419 / IAM 19013 / LMG 5710 / NBRC 13948 / NRRL B-527 / VKM B-1787 / 2291 / W).